The primary structure comprises 364 residues: UDP-N-acetylglucosamine--N-acetylmuramyl-(pentapeptide) pyrophosphoryl-undecaprenol N-acetylglucosamine transferase (364 aa).

Residues 10 to 12, Asn-124, Ser-195, Ile-250, and Gln-295 each bind UDP-N-acetyl-alpha-D-glucosamine; that span reads TGG.

The protein belongs to the glycosyltransferase 28 family. MurG subfamily.

It localises to the cell membrane. The enzyme catalyses Mur2Ac(oyl-L-Ala-gamma-D-Glu-L-Lys-D-Ala-D-Ala)-di-trans,octa-cis-undecaprenyl diphosphate + UDP-N-acetyl-alpha-D-glucosamine = beta-D-GlcNAc-(1-&gt;4)-Mur2Ac(oyl-L-Ala-gamma-D-Glu-L-Lys-D-Ala-D-Ala)-di-trans,octa-cis-undecaprenyl diphosphate + UDP + H(+). It participates in cell wall biogenesis; peptidoglycan biosynthesis. Functionally, cell wall formation. Catalyzes the transfer of a GlcNAc subunit on undecaprenyl-pyrophosphoryl-MurNAc-pentapeptide (lipid intermediate I) to form undecaprenyl-pyrophosphoryl-MurNAc-(pentapeptide)GlcNAc (lipid intermediate II). This Levilactobacillus brevis (strain ATCC 367 / BCRC 12310 / CIP 105137 / JCM 1170 / LMG 11437 / NCIMB 947 / NCTC 947) (Lactobacillus brevis) protein is UDP-N-acetylglucosamine--N-acetylmuramyl-(pentapeptide) pyrophosphoryl-undecaprenol N-acetylglucosamine transferase.